Reading from the N-terminus, the 326-residue chain is Protein FAM50 homolog (326 aa).

Residues isoleucine 77 to histidine 111 form a disordered region. Over residues aspartate 97–alanine 109 the composition is skewed to basic and acidic residues.

The protein belongs to the FAM50 family.

The sequence is that of Protein FAM50 homolog from Caenorhabditis elegans.